A 333-amino-acid chain; its full sequence is Tetraacyldisaccharide 4'-kinase (333 aa).

Residue threonine 60–threonine 67 participates in ATP binding.

Belongs to the LpxK family.

It carries out the reaction a lipid A disaccharide + ATP = a lipid IVA + ADP + H(+). It participates in glycolipid biosynthesis; lipid IV(A) biosynthesis; lipid IV(A) from (3R)-3-hydroxytetradecanoyl-[acyl-carrier-protein] and UDP-N-acetyl-alpha-D-glucosamine: step 6/6. In terms of biological role, transfers the gamma-phosphate of ATP to the 4'-position of a tetraacyldisaccharide 1-phosphate intermediate (termed DS-1-P) to form tetraacyldisaccharide 1,4'-bis-phosphate (lipid IVA). The polypeptide is Tetraacyldisaccharide 4'-kinase (Pseudomonas putida (strain GB-1)).